We begin with the raw amino-acid sequence, 484 residues long: Probable endopeptidase p60 (484 aa).

Residues 1 to 27 (MNMKKATIAATAGIAVTAFAAPTIASA) form the signal peptide. The LysM 1 domain occupies 28 to 71 (STVVVEAGDTLWGIAQSKGTTVDAIKKANNLTTDKIVPGQKLQV). Residues 80-144 (KTEKSVSATW…VNGKYLTDKA (65 aa)) enclose the SH3b domain. Positions 150 to 192 (APTQEVKKETTTQQAAPAAETKTEVKQTTQATTPAPKVAETKE) are disordered. Positions 160–169 (TTQQAAPAAE) are enriched in low complexity. Residues 201–244 (TTHAVKSGDTIWALSVKYGVSVQDIMSWNNLSSSSIYVGQKLAI) enclose the LysM 2 domain. The disordered stretch occupies residues 254 to 367 (KAEVKTEAPA…QGSSNNNSNS (114 aa)). Composition is skewed to low complexity over residues 273 to 282 (KENTNTNTAT) and 289 to 367 (ATQQ…NSNS). Residues 311 to 355 (TNTNANKTNTNTNTNTNTNNTNTNTPSKNTNTNSNTNTNTNSNTN) are 19 X 2 AA tandem repeats of T-N. The NlpC/P60 domain maps to 366–484 (NSSASAIIAE…GKYLVGFGRV (119 aa)). Catalysis depends on Cys396, which acts as the Nucleophile. Catalysis depends on His446, which acts as the Proton acceptor. The active site involves Asn458.

The protein belongs to the peptidase C40 family.

It localises to the cell surface. It is found in the secreted. Its function is as follows. This major extracellular protein may be involved in the invasion of non-professional phagocytic cells by Listeria. This chain is Probable endopeptidase p60 (iap), found in Listeria monocytogenes serovar 1/2a (strain ATCC BAA-679 / EGD-e).